The sequence spans 286 residues: NAD kinase (286 aa).

Residue aspartate 74 is the Proton acceptor of the active site. NAD(+) contacts are provided by residues 74-75 (DG), 148-149 (ND), aspartate 178, alanine 186, 189-194 (TAYNLS), and glutamine 244.

It belongs to the NAD kinase family. A divalent metal cation is required as a cofactor.

The protein resides in the cytoplasm. It catalyses the reaction NAD(+) + ATP = ADP + NADP(+) + H(+). Functionally, involved in the regulation of the intracellular balance of NAD and NADP, and is a key enzyme in the biosynthesis of NADP. Catalyzes specifically the phosphorylation on 2'-hydroxyl of the adenosine moiety of NAD to yield NADP. This chain is NAD kinase, found in Campylobacter jejuni subsp. doylei (strain ATCC BAA-1458 / RM4099 / 269.97).